A 174-amino-acid polypeptide reads, in one-letter code: ATP synthase subunit d, mitochondrial (174 aa).

Ser2 is subject to N-acetylserine.

The protein belongs to the ATPase d subunit family.

Its subcellular location is the mitochondrion inner membrane. Mitochondrial membrane ATP synthase (F(1)F(0) ATP synthase or Complex V) produces ATP from ADP in the presence of a proton gradient across the membrane which is generated by electron transport complexes of the respiratory chain. F-type ATPases consist of two structural domains, F(1) - containing the extramembraneous catalytic core, and F(0) - containing the membrane proton channel, linked together by a central stalk and a peripheral stalk. During catalysis, ATP synthesis in the catalytic domain of F(1) is coupled via a rotary mechanism of the central stalk subunits to proton translocation. Part of the complex F(0) domain and the peripheric stalk, which acts as a stator to hold the catalytic alpha(3)beta(3) subcomplex and subunit a/ATP6 static relative to the rotary elements. This Kluyveromyces lactis (strain ATCC 8585 / CBS 2359 / DSM 70799 / NBRC 1267 / NRRL Y-1140 / WM37) (Yeast) protein is ATP synthase subunit d, mitochondrial (ATP7).